Consider the following 637-residue polypeptide: Phosphomethylpyrimidine synthase (637 aa).

Substrate-binding positions include Asn242, Met271, Tyr300, His336, 356–358 (SRG), 397–400 (DGLR), and Glu436. His440 lines the Zn(2+) pocket. Residue Tyr463 coordinates substrate. His504 is a Zn(2+) binding site. The [4Fe-4S] cluster site is built by Cys584, Cys587, and Cys592.

The protein belongs to the ThiC family. As to quaternary structure, homodimer. It depends on [4Fe-4S] cluster as a cofactor.

It carries out the reaction 5-amino-1-(5-phospho-beta-D-ribosyl)imidazole + S-adenosyl-L-methionine = 4-amino-2-methyl-5-(phosphooxymethyl)pyrimidine + CO + 5'-deoxyadenosine + formate + L-methionine + 3 H(+). The protein operates within cofactor biosynthesis; thiamine diphosphate biosynthesis. Functionally, catalyzes the synthesis of the hydroxymethylpyrimidine phosphate (HMP-P) moiety of thiamine from aminoimidazole ribotide (AIR) in a radical S-adenosyl-L-methionine (SAM)-dependent reaction. In Herminiimonas arsenicoxydans, this protein is Phosphomethylpyrimidine synthase.